Reading from the N-terminus, the 224-residue chain is Proteasome subunit beta (224 aa).

The propeptide at 1–6 is removed in mature form; by autocatalysis; the sequence is MDVMKG. Catalysis depends on T7, which acts as the Nucleophile.

It belongs to the peptidase T1B family. As to quaternary structure, the 20S proteasome core is composed of 14 alpha and 14 beta subunits that assemble into four stacked heptameric rings, resulting in a barrel-shaped structure. The two inner rings, each composed of seven catalytic beta subunits, are sandwiched by two outer rings, each composed of seven alpha subunits. The catalytic chamber with the active sites is on the inside of the barrel. Has a gated structure, the ends of the cylinder being occluded by the N-termini of the alpha-subunits. Is capped at one or both ends by the proteasome regulatory ATPase, PAN.

The protein resides in the cytoplasm. It catalyses the reaction Cleavage of peptide bonds with very broad specificity.. The formation of the proteasomal ATPase PAN-20S proteasome complex, via the docking of the C-termini of PAN into the intersubunit pockets in the alpha-rings, triggers opening of the gate for substrate entry. Interconversion between the open-gate and close-gate conformations leads to a dynamic regulation of the 20S proteasome proteolysis activity. Component of the proteasome core, a large protease complex with broad specificity involved in protein degradation. This is Proteasome subunit beta from Methanocaldococcus sp. (strain FS406-22).